A 121-amino-acid polypeptide reads, in one-letter code: Large ribosomal subunit protein bL12 (121 aa).

The protein belongs to the bacterial ribosomal protein bL12 family. In terms of assembly, homodimer. Part of the ribosomal stalk of the 50S ribosomal subunit. Forms a multimeric L10(L12)X complex, where L10 forms an elongated spine to which 2 to 4 L12 dimers bind in a sequential fashion. Binds GTP-bound translation factors.

In terms of biological role, forms part of the ribosomal stalk which helps the ribosome interact with GTP-bound translation factors. Is thus essential for accurate translation. The sequence is that of Large ribosomal subunit protein bL12 from Serratia proteamaculans (strain 568).